A 232-amino-acid polypeptide reads, in one-letter code: Methylthioribulose-1-phosphate dehydratase (232 aa).

A substrate-binding site is contributed by cysteine 91. Zn(2+) contacts are provided by histidine 109, histidine 111, and histidine 191.

This sequence belongs to the aldolase class II family. MtnB subfamily. The cofactor is Zn(2+).

Its subcellular location is the cytoplasm. The enzyme catalyses 5-(methylsulfanyl)-D-ribulose 1-phosphate = 5-methylsulfanyl-2,3-dioxopentyl phosphate + H2O. It functions in the pathway amino-acid biosynthesis; L-methionine biosynthesis via salvage pathway; L-methionine from S-methyl-5-thio-alpha-D-ribose 1-phosphate: step 2/6. Its function is as follows. Catalyzes the dehydration of methylthioribulose-1-phosphate (MTRu-1-P) into 2,3-diketo-5-methylthiopentyl-1-phosphate (DK-MTP-1-P). The polypeptide is Methylthioribulose-1-phosphate dehydratase (Schizosaccharomyces japonicus (strain yFS275 / FY16936) (Fission yeast)).